Here is a 279-residue protein sequence, read N- to C-terminus: Pantothenate synthetase (279 aa).

31-38 (MGNLHGGH) serves as a coordination point for ATP. H38 (proton donor) is an active-site residue. Q62 serves as a coordination point for (R)-pantoate. Q62 provides a ligand contact to beta-alanine. 150–153 (GRKD) contributes to the ATP binding site. (R)-pantoate is bound at residue Q156. ATP-binding positions include V179 and 187 to 190 (KSSR).

The protein belongs to the pantothenate synthetase family. Homodimer.

The protein resides in the cytoplasm. It carries out the reaction (R)-pantoate + beta-alanine + ATP = (R)-pantothenate + AMP + diphosphate + H(+). The protein operates within cofactor biosynthesis; (R)-pantothenate biosynthesis; (R)-pantothenate from (R)-pantoate and beta-alanine: step 1/1. Catalyzes the condensation of pantoate with beta-alanine in an ATP-dependent reaction via a pantoyl-adenylate intermediate. The polypeptide is Pantothenate synthetase (Stenotrophomonas maltophilia (strain K279a)).